Consider the following 561-residue polypeptide: Potassium-transporting ATPase potassium-binding subunit (561 aa).

10 helical membrane passes run 4 to 24 (IVMQ…PLGI), 65 to 85 (AVSV…VLML), 133 to 153 (IGLT…LFAV), 177 to 197 (LYIL…QGVV), 253 to 273 (FTNL…VVMF), 285 to 305 (AIMT…TISE), 380 to 400 (GLYG…LLVG), 417 to 437 (MVCL…AVAV), 484 to 504 (MVGA…ALYL), and 528 to 548 (FIGL…LPAL).

The protein belongs to the KdpA family. In terms of assembly, the system is composed of three essential subunits: KdpA, KdpB and KdpC.

It is found in the cell membrane. Functionally, part of the high-affinity ATP-driven potassium transport (or Kdp) system, which catalyzes the hydrolysis of ATP coupled with the electrogenic transport of potassium into the cytoplasm. This subunit binds the extracellular potassium ions and delivers the ions to the membrane domain of KdpB through an intramembrane tunnel. This Listeria monocytogenes serovar 1/2a (strain ATCC BAA-679 / EGD-e) protein is Potassium-transporting ATPase potassium-binding subunit.